The sequence spans 256 residues: Imidazole glycerol phosphate synthase subunit HisF (256 aa).

Catalysis depends on residues D12 and D131.

Belongs to the HisA/HisF family. Heterodimer of HisH and HisF.

The protein resides in the cytoplasm. It carries out the reaction 5-[(5-phospho-1-deoxy-D-ribulos-1-ylimino)methylamino]-1-(5-phospho-beta-D-ribosyl)imidazole-4-carboxamide + L-glutamine = D-erythro-1-(imidazol-4-yl)glycerol 3-phosphate + 5-amino-1-(5-phospho-beta-D-ribosyl)imidazole-4-carboxamide + L-glutamate + H(+). It participates in amino-acid biosynthesis; L-histidine biosynthesis; L-histidine from 5-phospho-alpha-D-ribose 1-diphosphate: step 5/9. In terms of biological role, IGPS catalyzes the conversion of PRFAR and glutamine to IGP, AICAR and glutamate. The HisF subunit catalyzes the cyclization activity that produces IGP and AICAR from PRFAR using the ammonia provided by the HisH subunit. The chain is Imidazole glycerol phosphate synthase subunit HisF from Pseudomonas fluorescens (strain SBW25).